We begin with the raw amino-acid sequence, 574 residues long: FAD-linked oxidoreductase sor8 (574 aa).

Residues 1–27 (MYAPPFVRAFGIAVLAVLPSFSSPATA) form the signal peptide. N-linked (GlcNAc...) asparagine glycosylation is found at Asn58, Asn112, Asn136, Asn266, Asn312, Asn363, and Asn384. The FAD-binding PCMH-type domain occupies 126–305 (VIGTYVQYAV…YSMTVKAHAN (180 aa)).

Belongs to the oxygen-dependent FAD-linked oxidoreductase family. The cofactor is FAD.

It participates in secondary metabolite biosynthesis. FAD-linked oxidoreductase; part of the SOR gene cluster that mediates the biosynthesis of sorbicillinoids, a diverse group of yellow secondary metabolites that restrict growth of competing pathogenic fungi but not of bacteria. Sorbicillinoids biosynthesis requires the action of two PKSs. The SOR cluster is required for the production of trichodimerol and dihydrotrichotetronin, with sor2 being sufficient for production of trichodimerol, but not dihydrotrichotetronin in the light. Sor1 iteratively combines three acetyl units and the growing chain is modified by the ketoacyl reductase subunit, and optional by the enoyl reductase subunit in the second cycle. The polyketide is then handed over to the PKS sor2, which adds three more acetyl units, and two methyl groups. Sor2 releases an aldehyde, which undergoes spontaneous cyclization resulting in the formation of sorbicillin or 2',3'-dihydrosorbicillin. The monooxygenase sor5 oxidizes sorbicillin and 2',3'-dihydrosorbicillin to 2',3'-dihydrosorbicillinol and sorbicillinol, respectively. The oxidoreductase sor8 further converts sorbicillinol into oxosorbicillinol. Sorbicillinol is the building block for the other sorbicillinoids such as disorbicillinol, bisvertinolon, dihydrobisvertinolone, and dihydrotrichotetronine. The sequence is that of FAD-linked oxidoreductase sor8 from Hypocrea jecorina (strain QM6a) (Trichoderma reesei).